The following is a 396-amino-acid chain: Phosphoglycerate kinase (396 aa).

Substrate contacts are provided by residues 21–23 (DFN), Arg37, 60–63 (HLGR), Arg121, and Arg154. Residues Lys205, Gly296, Glu327, and 353–356 (GGDS) each bind ATP.

Belongs to the phosphoglycerate kinase family. As to quaternary structure, monomer.

It is found in the cytoplasm. The enzyme catalyses (2R)-3-phosphoglycerate + ATP = (2R)-3-phospho-glyceroyl phosphate + ADP. It functions in the pathway carbohydrate degradation; glycolysis; pyruvate from D-glyceraldehyde 3-phosphate: step 2/5. The sequence is that of Phosphoglycerate kinase from Anaeromyxobacter sp. (strain K).